The primary structure comprises 82 residues: ATP synthase subunit c (82 aa).

Helical transmembrane passes span 7–27 (FVAL…CIGI) and 53–73 (FLLA…AMMF).

The protein belongs to the ATPase C chain family. In terms of assembly, F-type ATPases have 2 components, F(1) - the catalytic core - and F(0) - the membrane proton channel. F(1) has five subunits: alpha(3), beta(3), gamma(1), delta(1), epsilon(1). F(0) has three main subunits: a(1), b(2) and c(10-14). The alpha and beta chains form an alternating ring which encloses part of the gamma chain. F(1) is attached to F(0) by a central stalk formed by the gamma and epsilon chains, while a peripheral stalk is formed by the delta and b chains.

It is found in the cell inner membrane. Its function is as follows. F(1)F(0) ATP synthase produces ATP from ADP in the presence of a proton or sodium gradient. F-type ATPases consist of two structural domains, F(1) containing the extramembraneous catalytic core and F(0) containing the membrane proton channel, linked together by a central stalk and a peripheral stalk. During catalysis, ATP synthesis in the catalytic domain of F(1) is coupled via a rotary mechanism of the central stalk subunits to proton translocation. Key component of the F(0) channel; it plays a direct role in translocation across the membrane. A homomeric c-ring of between 10-14 subunits forms the central stalk rotor element with the F(1) delta and epsilon subunits. The protein is ATP synthase subunit c of Aromatoleum aromaticum (strain DSM 19018 / LMG 30748 / EbN1) (Azoarcus sp. (strain EbN1)).